The chain runs to 340 residues: Nicotinate-nucleotide--dimethylbenzimidazole phosphoribosyltransferase (340 aa).

Catalysis depends on glutamate 305, which acts as the Proton acceptor.

The protein belongs to the CobT family.

It catalyses the reaction 5,6-dimethylbenzimidazole + nicotinate beta-D-ribonucleotide = alpha-ribazole 5'-phosphate + nicotinate + H(+). It participates in nucleoside biosynthesis; alpha-ribazole biosynthesis; alpha-ribazole from 5,6-dimethylbenzimidazole: step 1/2. In terms of biological role, catalyzes the synthesis of alpha-ribazole-5'-phosphate from nicotinate mononucleotide (NAMN) and 5,6-dimethylbenzimidazole (DMB). The chain is Nicotinate-nucleotide--dimethylbenzimidazole phosphoribosyltransferase from Allorhizobium ampelinum (strain ATCC BAA-846 / DSM 112012 / S4) (Agrobacterium vitis (strain S4)).